We begin with the raw amino-acid sequence, 675 residues long: Potassium-transporting ATPase ATP-binding subunit 2 (675 aa).

4 consecutive transmembrane segments (helical) span residues I34–I54, L65–F85, I216–L236, and L245–G265. D304 (4-aspartylphosphate intermediate) is an active-site residue. ATP-binding positions include D341, E345, F372–S379, and K390. Residues D513 and D517 each contribute to the Mg(2+) site. The next 3 membrane-spanning stretches (helical) occupy residues A569–M591, A611–M631, and I644–I664.

Belongs to the cation transport ATPase (P-type) (TC 3.A.3) family. Type IA subfamily. In terms of assembly, the system is composed of three essential subunits: KdpA, KdpB and KdpC.

It localises to the cell membrane. The enzyme catalyses K(+)(out) + ATP + H2O = K(+)(in) + ADP + phosphate + H(+). In terms of biological role, part of the high-affinity ATP-driven potassium transport (or Kdp) system, which catalyzes the hydrolysis of ATP coupled with the electrogenic transport of potassium into the cytoplasm. This subunit is responsible for energy coupling to the transport system and for the release of the potassium ions to the cytoplasm. The sequence is that of Potassium-transporting ATPase ATP-binding subunit 2 from Staphylococcus aureus (strain Mu50 / ATCC 700699).